A 378-amino-acid chain; its full sequence is tRNA-specific 2-thiouridylase MnmA (378 aa).

Residues 9–16 (GVSGGVDS) and Met-35 contribute to the ATP site. Positions 94-96 (NPD) are interaction with target base in tRNA. Catalysis depends on Cys-99, which acts as the Nucleophile. Cys-99 and Cys-195 are joined by a disulfide. Residue Gly-123 coordinates ATP. Positions 145–147 (KDQ) are interaction with tRNA. Residue Cys-195 is the Cysteine persulfide intermediate of the active site. Residues 307 to 308 (RY) are interaction with tRNA.

Belongs to the MnmA/TRMU family.

The protein resides in the cytoplasm. The enzyme catalyses S-sulfanyl-L-cysteinyl-[protein] + uridine(34) in tRNA + AH2 + ATP = 2-thiouridine(34) in tRNA + L-cysteinyl-[protein] + A + AMP + diphosphate + H(+). Functionally, catalyzes the 2-thiolation of uridine at the wobble position (U34) of tRNA, leading to the formation of s(2)U34. This is tRNA-specific 2-thiouridylase MnmA from Xanthomonas oryzae pv. oryzae (strain MAFF 311018).